The following is a 155-amino-acid chain: RxLR effector protein 24 (155 aa).

A signal peptide spans 1-21; the sequence is MRLLIWVLFVTLVTFVSNTTA. Residues 52–78 carry the RxLR-dEER motif; sequence RFLRTESKNDLKSDADTNGIDIEDEER. Residues 105–155 form an RABA-binding domain region; sequence EKAFQRMNQKGETPTTLAKRLDIGKTAEKRFEKTYEKYTAWWINHHTNAGT.

This sequence belongs to the RxLR effector family. Interacts with Arabidopsis thaliana RABA GTPases including RABA1a, RABA1b, RABA1c, RABA1d, RABA1f, RABA2a, RABA2c, RABA2d, RABA4a, RABA4b and RABA4c.

It localises to the secreted. It is found in the host cell membrane. Its subcellular location is the host endomembrane system. In terms of biological role, effector protein that contributes to pathogen virulence. Targets members of the RABA GTPases subfamily to inhibit vesicular secretion, leading to an accumulation of secretory proteins in the endoplasmic reticulum. In Phytophthora brassicae, this protein is RxLR effector protein 24.